Consider the following 122-residue polypeptide: Large ribosomal subunit protein uL14 (122 aa).

The protein belongs to the universal ribosomal protein uL14 family. In terms of assembly, part of the 50S ribosomal subunit. Forms a cluster with proteins L3 and L19. In the 70S ribosome, L14 and L19 interact and together make contacts with the 16S rRNA in bridges B5 and B8.

Binds to 23S rRNA. Forms part of two intersubunit bridges in the 70S ribosome. This chain is Large ribosomal subunit protein uL14, found in Clostridium botulinum (strain Alaska E43 / Type E3).